The sequence spans 248 residues: MARTFFVGGNFKLNGSKQSIKEIVERLNTASIPENVEVVICPPATYLDYSVSLVKKPQVTVGAQNAYLKASGAFTGENSVDQIKDVGAKWVILGHSERRSYFHEDDKFIADKTKFALGQGVGVILCIGETLEEKKAGKTLDVVERQLNAVLEEVKDWTNVVVAYEPVWAIGTGLAATPEDAQDIHASIRKFLASKLGDKAASELRILYGGSANGSNAVTFKDKADVDGFLVGGASLKPEFVDIINSRN.

Position 4 is a phosphothreonine (Thr4). 2 residues coordinate substrate: Asn10 and Lys12. Ser71 carries the phosphoserine modification. The active-site Electrophile is His95. The Proton acceptor role is filled by Glu165. Ser215 bears the Phosphoserine mark. Residue Lys223 forms a Glycyl lysine isopeptide (Lys-Gly) (interchain with G-Cter in ubiquitin) linkage.

The protein belongs to the triosephosphate isomerase family. Homodimer.

The catalysed reaction is D-glyceraldehyde 3-phosphate = dihydroxyacetone phosphate. Its pathway is carbohydrate biosynthesis; gluconeogenesis. It functions in the pathway carbohydrate degradation; glycolysis; D-glyceraldehyde 3-phosphate from glycerone phosphate: step 1/1. The sequence is that of Triosephosphate isomerase (TPI1) from Saccharomyces cerevisiae (strain ATCC 204508 / S288c) (Baker's yeast).